The chain runs to 307 residues: F-box protein PP2-B7 (307 aa).

An F-box domain is found at 37–83 (PLSLGDLPEECISLIISFTSPRDACVFALVSKTFESAVQSDIVWEKF).

The polypeptide is F-box protein PP2-B7 (PP2B7) (Arabidopsis thaliana (Mouse-ear cress)).